Consider the following 212-residue polypeptide: Adenylate kinase (212 aa).

Residue 10–15 (GAGKGT) coordinates ATP. Positions 30-59 (STGDMFRAAMANQTEMGRLAKSYIDKGELV) are NMP. AMP is bound by residues Thr31, Arg36, 57-59 (ELV), 86-89 (GYPR), and Gln93. The segment at 127-159 (GRIINRKTGETFHKVFNPPVDYKEEDYYQREDD) is LID. Residues Arg128 and 137 to 138 (TF) each bind ATP. The AMP site is built by Arg156 and Arg167. Gln195 provides a ligand contact to ATP.

Belongs to the adenylate kinase family. Monomer.

The protein resides in the cytoplasm. The enzyme catalyses AMP + ATP = 2 ADP. Its pathway is purine metabolism; AMP biosynthesis via salvage pathway; AMP from ADP: step 1/1. Its function is as follows. Catalyzes the reversible transfer of the terminal phosphate group between ATP and AMP. Plays an important role in cellular energy homeostasis and in adenine nucleotide metabolism. This Streptococcus pyogenes serotype M1 protein is Adenylate kinase.